Reading from the N-terminus, the 405-residue chain is Riboflavin biosynthesis protein RibBA (405 aa).

The tract at residues 1 to 205 (MSEIQLNTIE…IKDLIAYRLR (205 aa)) is DHBP synthase. D-ribulose 5-phosphate is bound by residues 30 to 31 (RE), aspartate 35, 144 to 148 (RAGHT), and glutamate 168. Glutamate 31 lines the Mg(2+) pocket. Histidine 147 is a binding site for Mg(2+). The interval 206–405 (TESIVENGVE…RMGHVLHNIK (200 aa)) is GTP cyclohydrolase II. 256–260 (RVHSS) contacts GTP. Residues cysteine 261, cysteine 272, and cysteine 274 each coordinate Zn(2+). GTP-binding positions include glutamine 277, 299–301 (EGR), and threonine 321. Aspartate 333 serves as the catalytic Proton acceptor; for GTP cyclohydrolase activity. The active-site Nucleophile; for GTP cyclohydrolase activity is the arginine 335. 2 residues coordinate GTP: serine 356 and lysine 361.

This sequence in the N-terminal section; belongs to the DHBP synthase family. In the C-terminal section; belongs to the GTP cyclohydrolase II family. Mg(2+) is required as a cofactor. The cofactor is Mn(2+). Requires Zn(2+) as cofactor.

It catalyses the reaction D-ribulose 5-phosphate = (2S)-2-hydroxy-3-oxobutyl phosphate + formate + H(+). It carries out the reaction GTP + 4 H2O = 2,5-diamino-6-hydroxy-4-(5-phosphoribosylamino)-pyrimidine + formate + 2 phosphate + 3 H(+). Its pathway is cofactor biosynthesis; riboflavin biosynthesis; 2-hydroxy-3-oxobutyl phosphate from D-ribulose 5-phosphate: step 1/1. It participates in cofactor biosynthesis; riboflavin biosynthesis; 5-amino-6-(D-ribitylamino)uracil from GTP: step 1/4. Catalyzes the conversion of D-ribulose 5-phosphate to formate and 3,4-dihydroxy-2-butanone 4-phosphate. In terms of biological role, catalyzes the conversion of GTP to 2,5-diamino-6-ribosylamino-4(3H)-pyrimidinone 5'-phosphate (DARP), formate and pyrophosphate. The chain is Riboflavin biosynthesis protein RibBA from Parabacteroides distasonis (strain ATCC 8503 / DSM 20701 / CIP 104284 / JCM 5825 / NCTC 11152).